We begin with the raw amino-acid sequence, 148 residues long: Putative fusion protein (148 aa).

Residues methionine 1 to glutamate 34 form a disordered region. Residues asparagine 16–glutamate 34 are compositionally biased toward basic and acidic residues.

It belongs to the poxviruses fusion protein family. As to quaternary structure, homotrimer, covalently linked.

Its subcellular location is the virion membrane. This chain is Putative fusion protein, found in Sheeppox virus (strain KS-1) (SPPV).